We begin with the raw amino-acid sequence, 201 residues long: Recombination protein RecR (201 aa).

The C4-type zinc-finger motif lies at 60–75 (CSCCGNVDTIDPCTVC). Residues 83 to 178 (AVIIVVEDVA…RITRLAHGVP (96 aa)) form the Toprim domain.

This sequence belongs to the RecR family.

May play a role in DNA repair. It seems to be involved in an RecBC-independent recombinational process of DNA repair. It may act with RecF and RecO. The sequence is that of Recombination protein RecR from Sinorhizobium medicae (strain WSM419) (Ensifer medicae).